Reading from the N-terminus, the 188-residue chain is MGTPNDQAVLQAIFNPDSPFGDIVGLDLGEEAEKEVDEGEVFPRAQLEQSKALELQAVIAAEAGDLSTALERFGQAINLLPERASAYNNRAQARRLQGDVAGALEDLERALALSGGRGRTARQGFVQRGLVARLQGRDDDARRDFERAARLGSPFARRQLVLLNPYAALCNRMLADVMGQLRRPCDER.

3 TPR repeats span residues 50–83 (SKAL…LPER), 85–117 (SAYN…SGGR), and 122–155 (RQGF…GSPF).

Belongs to the TTC36 family.

This chain is Tetratricopeptide repeat protein 36 (TTC36), found in Bos taurus (Bovine).